The sequence spans 420 residues: Gamma-glutamyl phosphate reductase (420 aa).

Belongs to the gamma-glutamyl phosphate reductase family.

The protein resides in the cytoplasm. It catalyses the reaction L-glutamate 5-semialdehyde + phosphate + NADP(+) = L-glutamyl 5-phosphate + NADPH + H(+). It participates in amino-acid biosynthesis; L-proline biosynthesis; L-glutamate 5-semialdehyde from L-glutamate: step 2/2. In terms of biological role, catalyzes the NADPH-dependent reduction of L-glutamate 5-phosphate into L-glutamate 5-semialdehyde and phosphate. The product spontaneously undergoes cyclization to form 1-pyrroline-5-carboxylate. This is Gamma-glutamyl phosphate reductase from Streptococcus pneumoniae serotype 2 (strain D39 / NCTC 7466).